A 468-amino-acid polypeptide reads, in one-letter code: Adenosylhomocysteinase (468 aa).

Substrate-binding residues include threonine 57, aspartate 132, and glutamate 194. NAD(+) is bound at residue 195-197; it reads TTT. Substrate-binding residues include lysine 224 and aspartate 228. Residues asparagine 229, 258–263, glutamate 281, asparagine 316, 337–339, and asparagine 382 each bind NAD(+); these read GFGDVG and IGH.

This sequence belongs to the adenosylhomocysteinase family. NAD(+) is required as a cofactor.

The protein resides in the cytoplasm. The enzyme catalyses S-adenosyl-L-homocysteine + H2O = L-homocysteine + adenosine. It participates in amino-acid biosynthesis; L-homocysteine biosynthesis; L-homocysteine from S-adenosyl-L-homocysteine: step 1/1. May play a key role in the regulation of the intracellular concentration of adenosylhomocysteine. The chain is Adenosylhomocysteinase from Methylorubrum populi (strain ATCC BAA-705 / NCIMB 13946 / BJ001) (Methylobacterium populi).